The primary structure comprises 379 residues: Pentatricopeptide repeat-containing protein At3g25210, mitochondrial (379 aa).

6 PPR repeats span residues 142 to 177 (SVPL…DDSK), 179 to 221 (DLET…GVIP), 222 to 256 (DTFV…GSEP), 257 to 291 (NAYT…GMVP), 292 to 326 (NGSC…SLSP), and 327 to 361 (DMLT…DPVM).

This sequence belongs to the PPR family. P subfamily.

The protein localises to the mitochondrion. The sequence is that of Pentatricopeptide repeat-containing protein At3g25210, mitochondrial from Arabidopsis thaliana (Mouse-ear cress).